The primary structure comprises 461 residues: Bifunctional protein HldE (461 aa).

The segment at 1-311 is ribokinase; the sequence is MKKILVVGDL…EEIALILNQT (311 aa). An ATP-binding site is contributed by 191–194; it reads NRAE. Asp-260 is a catalytic residue. A cytidylyltransferase region spans residues 332–461; the sequence is FTNGCFDLLH…IEKIKRTHND (130 aa).

This sequence in the N-terminal section; belongs to the carbohydrate kinase PfkB family. In the C-terminal section; belongs to the cytidylyltransferase family. In terms of assembly, homodimer.

The catalysed reaction is D-glycero-beta-D-manno-heptose 7-phosphate + ATP = D-glycero-beta-D-manno-heptose 1,7-bisphosphate + ADP + H(+). It carries out the reaction D-glycero-beta-D-manno-heptose 1-phosphate + ATP + H(+) = ADP-D-glycero-beta-D-manno-heptose + diphosphate. It functions in the pathway nucleotide-sugar biosynthesis; ADP-L-glycero-beta-D-manno-heptose biosynthesis; ADP-L-glycero-beta-D-manno-heptose from D-glycero-beta-D-manno-heptose 7-phosphate: step 1/4. It participates in nucleotide-sugar biosynthesis; ADP-L-glycero-beta-D-manno-heptose biosynthesis; ADP-L-glycero-beta-D-manno-heptose from D-glycero-beta-D-manno-heptose 7-phosphate: step 3/4. Catalyzes the phosphorylation of D-glycero-D-manno-heptose 7-phosphate at the C-1 position to selectively form D-glycero-beta-D-manno-heptose-1,7-bisphosphate. Functionally, catalyzes the ADP transfer from ATP to D-glycero-beta-D-manno-heptose 1-phosphate, yielding ADP-D-glycero-beta-D-manno-heptose. This Helicobacter pylori (strain P12) protein is Bifunctional protein HldE.